An 84-amino-acid polypeptide reads, in one-letter code: Large ribosomal subunit protein bL31 (84 aa).

2 disordered regions span residues 1–41 (MQHD…DSTN) and 63–84 (RRYG…AADE). Residues 21–30 (EITTRSTMET) show a composition bias toward polar residues. The span at 68-84 (TDDDEGDDEETEDAADE) shows a compositional bias: acidic residues.

The protein belongs to the bacterial ribosomal protein bL31 family. Type A subfamily. In terms of assembly, part of the 50S ribosomal subunit.

Binds the 23S rRNA. The protein is Large ribosomal subunit protein bL31 of Salinibacter ruber (strain DSM 13855 / M31).